The sequence spans 452 residues: MKATSNLLLLWGTSLLSPSSAFVIDNHHYQHPLVVDDSSSSSISPLKIFTSSGPSANKEDAPSYRKNLLSLHKSLIEIPSISRTEQEVGKFLLDYLRNNLGYIAKAQFLEGSSSDPFSQYDDDDHSQGRFNVLAWPSSHNLSSPRVLVTSHIDVVPPFIPYHISTSSESDEEITSDAFISGRGSVDAKASVAAQIVAVEELIRAKEVDPADLMLLFVVGEEISGDGMKTFSVVYNDAEKSKKEELPRFKAAIYGEPTENKLSCGHKGHTGGVLKATGIAGHSGYPWLFKSATEILVKALAKIIDADLGSSERYGNTTVNIGTIAGGVAANVIPKEASAKLAIRVAAGNQATGADIVRSAVDKILKEVDEEAFTMEWAGGYGPVECDCDVDGFETMVASYGTDVPNFEGDHVSYLYGPGSILVAHGDDEGLKVGDLETAVEGYKTLIKHALGA.

Positions 1–28 are cleaved as a signal peptide; that stretch reads MKATSNLLLLWGTSLLSPSSAFVIDNHH. N140 carries N-linked (GlcNAc...) asparagine glycosylation. D186 is a binding site for Zn(2+). The active-site Proton acceptor is the E220. E221 contacts Zn(2+). N-linked (GlcNAc...) asparagine glycosylation occurs at N315.

This sequence belongs to the peptidase M20A family. Zn(2+) is required as a cofactor.

It is found in the secreted. The protein is Peptidase M20 domain-containing protein SMAC_03666.2 of Sordaria macrospora (strain ATCC MYA-333 / DSM 997 / K(L3346) / K-hell).